The following is a 282-amino-acid chain: Serine/threonine-protein kinase Aurora-2 (282 aa).

The 252-residue stretch at 19–270 folds into the Protein kinase domain; that stretch reads FDIGKPLGRG…LHKLLEHPWI (252 aa). Residues 25-33 and Lys48 each bind ATP; that span reads LGRGKFGHV. Asp142 functions as the Proton acceptor in the catalytic mechanism. Ser164 is subject to Phosphoserine. Thr173 carries the phosphothreonine modification.

This sequence belongs to the protein kinase superfamily. Ser/Thr protein kinase family. Aurora subfamily. Post-translationally, phosphorylation at Thr-173 may regulate activity and degradation of AUR2 in a cell cycle dependent manner. Abundant in roots, flowers and flower buds, low or absent in expanded leaves, stems and siliques.

It is found in the nucleus membrane. It localises to the cytoplasm. The protein localises to the cytoskeleton. The protein resides in the spindle. Its subcellular location is the spindle pole. The enzyme catalyses L-seryl-[protein] + ATP = O-phospho-L-seryl-[protein] + ADP + H(+). It carries out the reaction L-threonyl-[protein] + ATP = O-phospho-L-threonyl-[protein] + ADP + H(+). Functionally, phosphorylates specifically 'Ser-10' of histone H3 in vitro. Associates with cytoskeletal structures that are necessary for cytokinesis and with the microtubule spindle. Might colocalize with gamma-tubulin and function in microtubule organizing centers (MTOCs). The protein is Serine/threonine-protein kinase Aurora-2 (AUR2) of Arabidopsis thaliana (Mouse-ear cress).